The primary structure comprises 118 residues: Elongin-B (118 aa).

M1 bears the N-acetylmethionine mark. Residues 1 to 66 (MDVFLMIRRH…LGECGFTSQT (66 aa)) form the Ubiquitin-like domain. The residue at position 84 (T84) is a Phosphothreonine. The segment at 92–118 (PFSSPPELPDVMKPQDSGSSANEQAVQ) is disordered. Over residues 107–118 (DSGSSANEQAVQ) the composition is skewed to polar residues. 2 positions are modified to phosphoserine: S108 and S111.

It belongs to the Elongin B family. As to quaternary structure, heterotrimer of an A (ELOA, ELOA2 or ELOA3P), ELOB and ELOC subunit. The elongin BC complex interacts with EPOP; leading to recruit the elongin BC complex to Polycomb group (PcG) target genes, thereby restricting excessive activity of the PRC2/EED-EZH2 complex. Component of multiple cullin-RING E3 ubiquitin-protein ligase complexes composed of Elongin BC (ELOB and ELOC), a cullin (either CUL2 or CUL5), a catalytic subunit (either RBX1 or RNF7/RBX2), as well as a substrate adapter protein that can be either ASB2, ASB9, ASB11, KLHDC2, KLHDC3, KLHDC10, APPBP2, FEM1A, FEM1B, FEM1C, LRR1, PCMTD1, SOCS1, SOCS2, SOCS5, SPSB1, SPSB3, ELOA, VHL, WSB1 or RAB40C. As part of the Elongin BC E3 ubiquitin ligase complex; interacts with NRBP1. May also interact with DCUN1D1, DCUN1D2, DCUN1D3 and DCUN1D5. May form oligomers as a KLHDC2/KLHDC3-ELOB-ELOC complex; this interaction is autoinhibitory for the E3 ligase complex as the substrate-binding site of KLHDC2/KLHDC3 is blocked in the oligomer. (Microbial infection) Following infection by HIV-1 virus, component of a cullin-5-RING E3 ubiquitin-protein ligase complex (ECS complex) hijacked by the HIV-1 Vif protein. In terms of assembly, (Microbial infection) Substrate adapter protein can be a viral protein such as HIV Vif. As to quaternary structure, (Microbial infection) Interacts with molluscum contagiosum virus MC132. (Microbial infection) Interacts with herpes virus 8 virus protein LANA1.

The protein localises to the nucleus. It participates in protein modification; protein ubiquitination. Functionally, SIII, also known as elongin, is a general transcription elongation factor that increases the RNA polymerase II transcription elongation past template-encoded arresting sites. Subunit A is transcriptionally active and its transcription activity is strongly enhanced by binding to the dimeric complex of the SIII regulatory subunits B and C (elongin BC complex). In embryonic stem cells, the elongin BC complex is recruited by EPOP to Polycomb group (PcG) target genes in order generate genomic region that display both active and repressive chromatin properties, an important feature of pluripotent stem cells. Core component of multiple cullin-2 and cullin-5-RING E3 ubiquitin-protein ligase complexes (ECS complexes), which mediate the ubiquitination of target proteins. By binding to BC-box motifs it seems to link target recruitment subunits, like VHL and members of the SOCS box family, to Cullin/RBX1 modules that activate E2 ubiquitination enzymes. Component the von Hippel-Lindau ubiquitination complex CBC(VHL). A number of ECS complexes (containing either KLHDC2, KLHDC3, KLHDC10, APPBP2, FEM1A, FEM1B or FEM1C as substrate-recognition component) are part of the DesCEND (destruction via C-end degrons) pathway, which recognizes a C-degron located at the extreme C terminus of target proteins, leading to their ubiquitination and degradation. The ECS(ASB9) complex mediates ubiquitination and degradation of CKB. As part of a multisubunit ubiquitin ligase complex, polyubiquitinates monoubiquitinated POLR2A. ECS(LRR1) ubiquitinates MCM7 and promotes CMG replisome disassembly by VCP and chromatin extraction during S-phase. As part of the ECS(RAB40C) complex, mediates ANKRD28 ubiquitination and degradation, thereby inhibiting protein phosphatase 6 (PP6) complex activity and focal adhesion assembly during cell migration. In terms of biological role, (Microbial infection) Following infection by HIV-1 virus, component of a cullin-5-RING E3 ubiquitin-protein ligase complex (ECS complex) hijacked by the HIV-1 Vif protein, which catalyzes ubiquitination and degradation of APOBEC3F and APOBEC3G. The complex can also ubiquitinate APOBEC3H to some extent. The polypeptide is Elongin-B (Homo sapiens (Human)).